A 255-amino-acid polypeptide reads, in one-letter code: Small ribosomal subunit protein eS1 (255 aa).

Residue Ala-2 is modified to N-acetylalanine; partial.

The protein belongs to the eukaryotic ribosomal protein eS1 family. Component of the small ribosomal subunit. Mature ribosomes consist of a small (40S) and a large (60S) subunit. The 40S subunit contains about 33 different proteins and 1 molecule of RNA (18S). The 60S subunit contains about 49 different proteins and 3 molecules of RNA (25S, 5.8S and 5S).

It localises to the cytoplasm. The polypeptide is Small ribosomal subunit protein eS1 (rps1) (Pyrenophora tritici-repentis (strain Pt-1C-BFP) (Wheat tan spot fungus)).